A 568-amino-acid polypeptide reads, in one-letter code: Urease subunit alpha (568 aa).

Residues 131 to 568 (GGIDTHIHFI…LPMAQRYFLF (438 aa)) form the Urease domain. His136, His138, and Lys219 together coordinate Ni(2+). The residue at position 219 (Lys219) is an N6-carboxylysine. His221 provides a ligand contact to substrate. Residues His248 and His274 each coordinate Ni(2+). His322 acts as the Proton donor in catalysis. A Ni(2+)-binding site is contributed by Asp362.

Belongs to the metallo-dependent hydrolases superfamily. Urease alpha subunit family. Heterotrimer of UreA (gamma), UreB (beta) and UreC (alpha) subunits. Three heterotrimers associate to form the active enzyme. Requires Ni cation as cofactor. In terms of processing, carboxylation allows a single lysine to coordinate two nickel ions.

It localises to the cytoplasm. It catalyses the reaction urea + 2 H2O + H(+) = hydrogencarbonate + 2 NH4(+). It participates in nitrogen metabolism; urea degradation; CO(2) and NH(3) from urea (urease route): step 1/1. In Trichormus variabilis (strain ATCC 29413 / PCC 7937) (Anabaena variabilis), this protein is Urease subunit alpha.